Consider the following 700-residue polypeptide: Mei4-dependent protein 6 (700 aa).

Kelch repeat units follow at residues C276–D322, K327–G381, I390–R439, K452–R499, R508–G558, and I569–E619.

The sequence is that of Mei4-dependent protein 6 (mde6) from Schizosaccharomyces pombe (strain 972 / ATCC 24843) (Fission yeast).